The following is a 527-amino-acid chain: Phosphoenolpyruvate carboxykinase (ATP) (527 aa).

Residues R54, Y190, and K196 each coordinate substrate. Residues K196, H215, and 231–239 (GLSGTGKTT) contribute to the ATP site. Mn(2+) contacts are provided by K196 and H215. Residue D252 coordinates Mn(2+). ATP is bound by residues E280, R317, 436-437 (RI), and T442. Residue R317 coordinates substrate.

Belongs to the phosphoenolpyruvate carboxykinase (ATP) family. Requires Mn(2+) as cofactor.

The protein resides in the cytoplasm. It catalyses the reaction oxaloacetate + ATP = phosphoenolpyruvate + ADP + CO2. It participates in carbohydrate biosynthesis; gluconeogenesis. Functionally, involved in the gluconeogenesis. Catalyzes the conversion of oxaloacetate (OAA) to phosphoenolpyruvate (PEP) through direct phosphoryl transfer between the nucleoside triphosphate and OAA. This is Phosphoenolpyruvate carboxykinase (ATP) from Oceanobacillus iheyensis (strain DSM 14371 / CIP 107618 / JCM 11309 / KCTC 3954 / HTE831).